The sequence spans 159 residues: SsrA-binding protein (159 aa).

It belongs to the SmpB family.

Its subcellular location is the cytoplasm. In terms of biological role, required for rescue of stalled ribosomes mediated by trans-translation. Binds to transfer-messenger RNA (tmRNA), required for stable association of tmRNA with ribosomes. tmRNA and SmpB together mimic tRNA shape, replacing the anticodon stem-loop with SmpB. tmRNA is encoded by the ssrA gene; the 2 termini fold to resemble tRNA(Ala) and it encodes a 'tag peptide', a short internal open reading frame. During trans-translation Ala-aminoacylated tmRNA acts like a tRNA, entering the A-site of stalled ribosomes, displacing the stalled mRNA. The ribosome then switches to translate the ORF on the tmRNA; the nascent peptide is terminated with the 'tag peptide' encoded by the tmRNA and targeted for degradation. The ribosome is freed to recommence translation, which seems to be the essential function of trans-translation. The sequence is that of SsrA-binding protein from Mycobacteroides abscessus (strain ATCC 19977 / DSM 44196 / CCUG 20993 / CIP 104536 / JCM 13569 / NCTC 13031 / TMC 1543 / L948) (Mycobacterium abscessus).